The following is a 429-amino-acid chain: MEFTESERLQSLSDEYILGGVNSPSRSYKAVGGGAPVVMKEGKGQYLYDVDGNRYIDYLQAYGPIITGHAHPHITKAIQEQAAKGVLYGTPTELEIKFAKKLREAIPSLKKMRFVNSGTEAVMTTIRVARAYTNRNKIIKFAGSYHGHSDLVLVAAGSGPSQLGSPDSAGVPKSVAQEVITVPFNDIEAYKEAMKHWGNEVAAVLVEPIVGNFGMVEPKPGFLEAVNEITHEYGGLVVYDEVITAFRFHYGAAQDLLNVYPDLTAFGKIVGGGLPIGGYGGRQDIMEQVAPLGPAYQAGTMAGNPLSMKAGIALLEVLEQDGVYEELDRLGKKLEDGLNELIDKHDITATINRVYGSLTLYFTDEKVTHYDQAENADGDAFAKFFKLMLNQGINLAPSKFEAWFLTTEHTDEDIEETLRAADYAFSQMK.

Position 268 is an N6-(pyridoxal phosphate)lysine (K268).

Belongs to the class-III pyridoxal-phosphate-dependent aminotransferase family. HemL subfamily. As to quaternary structure, homodimer. Pyridoxal 5'-phosphate serves as cofactor.

It localises to the cytoplasm. The catalysed reaction is (S)-4-amino-5-oxopentanoate = 5-aminolevulinate. It functions in the pathway porphyrin-containing compound metabolism; protoporphyrin-IX biosynthesis; 5-aminolevulinate from L-glutamyl-tRNA(Glu): step 2/2. The chain is Glutamate-1-semialdehyde 2,1-aminomutase 2 from Staphylococcus carnosus (strain TM300).